A 736-amino-acid chain; its full sequence is Transcription factor E2F8 (736 aa).

Positions 1–26 (MEEGSKENCGFNGSPMGSRSPPKQLT) are disordered. The span at 15–26 (PMGSRSPPKQLT) shows a compositional bias: polar residues. 2 consecutive DNA-binding regions follow at residues 98-167 (RKEK…IWHG) and 240-326 (RKEK…QWTC). Disordered regions lie at residues 386-405 (RRKI…GSSS), 435-456 (SACK…QTPT), 483-551 (EQTL…AVDD), and 716-736 (PGGM…GTDD). Over residues 393 to 405 (PSSPIKSGDGSSS) the composition is skewed to low complexity. Composition is skewed to basic and acidic residues over residues 509 to 539 (GRHE…DRGC) and 726 to 736 (SARKLDVGTDD).

Belongs to the E2F/DP family. Homodimer and heterodimer: mainly forms homodimers and, to a lesser extent, heterodimers with e2f7.

The protein localises to the nucleus. Its function is as follows. Atypical E2F transcription factor that participates in various processes such as angiogenesis and polyploidization of specialized cells. Mainly acts as a transcription repressor that binds DNA independently of DP proteins and specifically recognizes the E2 recognition site 5'-TTTC[CG]CGC-3'. Directly represses transcription of classical E2F transcription factors such as e2f1. Acts as a regulator of S-phase by recognizing and binding the E2-related site 5'-TTCCCGCC-3' and mediating repression of G1/S-regulated genes. Acts as a promoter of sprouting angiogenesis, possibly by acting as a transcription activator. This is Transcription factor E2F8 (e2f8) from Xenopus tropicalis (Western clawed frog).